The primary structure comprises 131 residues: Profilin (131 aa).

Cys13 and Cys115 form a disulfide bridge. The Involved in PIP2 interaction signature appears at 81–97 (AVIRGKKGSGGVTVKKT). Thr111 is subject to Phosphothreonine.

This sequence belongs to the profilin family. In terms of assembly, occurs in many kinds of cells as a complex with monomeric actin in a 1:1 ratio.

It is found in the cytoplasm. The protein localises to the cytoskeleton. Binds to actin and affects the structure of the cytoskeleton. At high concentrations, profilin prevents the polymerization of actin, whereas it enhances it at low concentrations. This chain is Profilin, found in Phoenix dactylifera (Date palm).